A 151-amino-acid polypeptide reads, in one-letter code: 3-hydroxyacyl-[acyl-carrier-protein] dehydratase FabZ (151 aa).

H49 is an active-site residue.

This sequence belongs to the thioester dehydratase family. FabZ subfamily.

It localises to the cytoplasm. The catalysed reaction is a (3R)-hydroxyacyl-[ACP] = a (2E)-enoyl-[ACP] + H2O. In terms of biological role, involved in unsaturated fatty acids biosynthesis. Catalyzes the dehydration of short chain beta-hydroxyacyl-ACPs and long chain saturated and unsaturated beta-hydroxyacyl-ACPs. In Bordetella petrii (strain ATCC BAA-461 / DSM 12804 / CCUG 43448), this protein is 3-hydroxyacyl-[acyl-carrier-protein] dehydratase FabZ.